The chain runs to 174 residues: ATP-dependent protease subunit HslV (174 aa).

Residue threonine 2 is part of the active site. Positions 157, 160, and 163 each coordinate Na(+).

Belongs to the peptidase T1B family. HslV subfamily. A double ring-shaped homohexamer of HslV is capped on each side by a ring-shaped HslU homohexamer. The assembly of the HslU/HslV complex is dependent on binding of ATP.

It is found in the cytoplasm. The catalysed reaction is ATP-dependent cleavage of peptide bonds with broad specificity.. Its activity is regulated as follows. Allosterically activated by HslU binding. In terms of biological role, protease subunit of a proteasome-like degradation complex believed to be a general protein degrading machinery. This is ATP-dependent protease subunit HslV from Shewanella woodyi (strain ATCC 51908 / MS32).